The following is a 144-amino-acid chain: Cysteine-rich tail protein 1 (144 aa).

The interval 51–105 (APEPTHLLQPTEVPGPKGAKGNQGAAPIQNQQAWQQPGNPYSSSQRQAGLTYAGP) is disordered. Positions 78 to 98 (IQNQQAWQQPGNPYSSSQRQA) are enriched in polar residues.

The protein belongs to the CYSRT1 family. As to quaternary structure, interacts with LCE1B; the interaction is direct. Interacts with LCE2C; the interaction is direct. Interacts with LCE3A; the interaction is direct. Interacts with LCE3C; the interaction is direct. Interacts with LCE4A; the interaction is direct. Interacts with LCE5A; the interaction is direct. Interacts with LCE1C. Interacts with LCE1D. Interacts with LCE1E. Interacts with LCE2A. Interacts with LCE3D. Interacts with LCE3E. Interacts with LCE1A. Expressed in the stratum granulosum, in skin and oral epithelia (at protein level).

It localises to the cornified envelope. Component of the stratum corneum that may contribute to epidermal antimicrobial host defenses. The protein is Cysteine-rich tail protein 1 (CYSRT1) of Homo sapiens (Human).